The chain runs to 504 residues: L-carnitine/gamma-butyrobetaine antiporter (504 aa).

The next 12 helical transmembrane spans lie at 10-30, 51-71, 92-112, 143-163, 195-215, 231-251, 263-283, 316-336, 347-367, 398-418, 446-466, and 475-495; these read IEPKVFFPPLIIVGILCWLTV, WGWAFEWYMVVMLFGWFWLVF, IFMMFASCTSAAVLFWGSIEI, GPLPWATYSFLSVAFAYFFFV, FYLVALIFAMGTSLGLATPLV, LDAIIITCWIILNAICVACGL, SYLSFLMLGWVFIVSGASFIM, WTVFYWAWWVIYAIQMSIFLA, LCFGMVMGLTASTWILWTVLG, WAALPLSTATMWGFFILCFIA, LLVRIGWSILVGIIGIVLLAL, and AIIAGGCPLFFVNIMVTLSFI.

The protein belongs to the BCCT transporter (TC 2.A.15) family. CaiT subfamily. Homotrimer.

Its subcellular location is the cell inner membrane. It carries out the reaction 4-(trimethylamino)butanoate(in) + (R)-carnitine(out) = 4-(trimethylamino)butanoate(out) + (R)-carnitine(in). It functions in the pathway amine and polyamine metabolism; carnitine metabolism. Catalyzes the exchange of L-carnitine for gamma-butyrobetaine. The chain is L-carnitine/gamma-butyrobetaine antiporter from Escherichia coli O157:H7.